The chain runs to 581 residues: Aspartate--tRNA ligase (581 aa).

E170 contributes to the L-aspartate binding site. An aspartate region spans residues 194–197 (QLFK). R216 is a binding site for L-aspartate. Residues 216–218 (RDE) and Q225 each bind ATP. Residue H439 coordinates L-aspartate. E468 contributes to the ATP binding site. R475 serves as a coordination point for L-aspartate. 520–523 (GFDR) provides a ligand contact to ATP.

The protein belongs to the class-II aminoacyl-tRNA synthetase family. Type 1 subfamily. As to quaternary structure, homodimer.

It is found in the cytoplasm. The enzyme catalyses tRNA(Asp) + L-aspartate + ATP = L-aspartyl-tRNA(Asp) + AMP + diphosphate. Catalyzes the attachment of L-aspartate to tRNA(Asp) in a two-step reaction: L-aspartate is first activated by ATP to form Asp-AMP and then transferred to the acceptor end of tRNA(Asp). In Thermosipho melanesiensis (strain DSM 12029 / CIP 104789 / BI429), this protein is Aspartate--tRNA ligase.